The sequence spans 1115 residues: Lateral signaling target protein 2 homolog (1115 aa).

Disordered stretches follow at residues 308-488 (PLGS…DSDS), 545-586 (SEDD…PSTS), 600-742 (RLPS…SLSD), and 879-1027 (VQSS…PDGK). The segment covering 322-361 (NNSSSTTNTSNNNNNNTNNNNSSSGSDCTNNDKTGTTTNT) has biased composition (low complexity). The segment covering 363 to 373 (KPVERLVDHRN) has biased composition (basic and acidic residues). Composition is skewed to low complexity over residues 374 to 417 (NNTT…TPTA) and 425 to 444 (PSHS…NSPA). Positions 449-488 (YDDDDEDDDDDDVHADVEEDEDESGILDSDEHDLNDDSDS) are enriched in acidic residues. Composition is skewed to low complexity over residues 558–577 (QQQQ…QQQQ) and 600–614 (RLPS…SSNN). Serine 603 and serine 604 each carry phosphoserine. Residues 615-628 (QQMTIKSPSEQTTT) are compositionally biased toward polar residues. Residues 632 to 655 (SNRHRHHSHHHHHHHHSHHHHHHQ) are compositionally biased toward basic residues. Low complexity predominate over residues 658–676 (AAVAVAAAQDEQHNNNQPH). Over residues 677-706 (SHSHSSSHHHHHNHQSHSHPHRANRSTRKR) the composition is skewed to basic residues. Composition is skewed to low complexity over residues 714–726 (TITT…GGEQ), 733–742 (DSSTASSLSD), and 881–901 (SSNS…AARS). Residue serine 908 is modified to Phosphoserine. 2 stretches are compositionally biased toward low complexity: residues 921–975 (QQQQ…SPVS) and 988–1020 (TTTT…MSPP). Residues 1025–1085 (DGKAPRCMSC…VCRECFMREV (61 aa)) form an FYVE-type zinc finger. Positions 1031, 1034, 1047, 1050, 1055, 1058, 1077, and 1080 each coordinate Zn(2+). Positions 1088–1115 (SHSHGQSQSQIHSPTQQAGGRPQAASAS) are disordered. Low complexity predominate over residues 1090-1100 (SHGQSQSQIHS).

This sequence belongs to the lst-2 family.

In terms of biological role, negative regulator of epidermal growth factor receptor (EGFR) signaling. This is Lateral signaling target protein 2 homolog from Drosophila grimshawi (Hawaiian fruit fly).